The following is a 189-amino-acid chain: ATP-dependent protease subunit HslV (189 aa).

The active site involves T12. Residues S172, C175, and T178 each contribute to the Na(+) site.

It belongs to the peptidase T1B family. HslV subfamily. In terms of assembly, a double ring-shaped homohexamer of HslV is capped on each side by a ring-shaped HslU homohexamer. The assembly of the HslU/HslV complex is dependent on binding of ATP.

It is found in the cytoplasm. It carries out the reaction ATP-dependent cleavage of peptide bonds with broad specificity.. Allosterically activated by HslU binding. Protease subunit of a proteasome-like degradation complex believed to be a general protein degrading machinery. The protein is ATP-dependent protease subunit HslV of Ehrlichia canis (strain Jake).